The primary structure comprises 344 residues: Dihydroorotate dehydrogenase (quinone) (344 aa).

Residues 61–65 (AGLDK) and Thr85 each bind FMN. Substrate is bound at residue Lys65. Residue 110 to 114 (NRMGF) participates in substrate binding. Asn138 and Asn171 together coordinate FMN. Asn171 lines the substrate pocket. Catalysis depends on Ser174, which acts as the Nucleophile. Asn176 is a substrate binding site. FMN contacts are provided by Lys216 and Thr244. Substrate is bound at residue 245–246 (NT). FMN is bound by residues Gly267, Gly296, and 317–318 (YS).

This sequence belongs to the dihydroorotate dehydrogenase family. Type 2 subfamily. In terms of assembly, monomer. FMN is required as a cofactor.

It localises to the cell membrane. The catalysed reaction is (S)-dihydroorotate + a quinone = orotate + a quinol. It functions in the pathway pyrimidine metabolism; UMP biosynthesis via de novo pathway; orotate from (S)-dihydroorotate (quinone route): step 1/1. In terms of biological role, catalyzes the conversion of dihydroorotate to orotate with quinone as electron acceptor. The sequence is that of Dihydroorotate dehydrogenase (quinone) from Psychrobacter cryohalolentis (strain ATCC BAA-1226 / DSM 17306 / VKM B-2378 / K5).